The chain runs to 356 residues: Branched-chain-amino-acid transaminase 1 (356 aa).

Residue K197 is modified to N6-(pyridoxal phosphate)lysine.

The protein belongs to the class-IV pyridoxal-phosphate-dependent aminotransferase family. Requires pyridoxal 5'-phosphate as cofactor.

It catalyses the reaction L-leucine + 2-oxoglutarate = 4-methyl-2-oxopentanoate + L-glutamate. The catalysed reaction is L-isoleucine + 2-oxoglutarate = (S)-3-methyl-2-oxopentanoate + L-glutamate. The enzyme catalyses L-valine + 2-oxoglutarate = 3-methyl-2-oxobutanoate + L-glutamate. It participates in amino-acid biosynthesis; L-isoleucine biosynthesis; L-isoleucine from 2-oxobutanoate: step 4/4. The protein operates within amino-acid biosynthesis; L-leucine biosynthesis; L-leucine from 3-methyl-2-oxobutanoate: step 4/4. It functions in the pathway amino-acid biosynthesis; L-valine biosynthesis; L-valine from pyruvate: step 4/4. Inhibited by canaline. In terms of biological role, transaminates branched-chain amino acids and ketoglutarate. Involved in the final step of the methionine regeneration pathway, where ketomethiobutyrate (KMTB) is converted to methionine via a transamination. The amino donor preference is isoleucine, leucine, valine, phenylalanine, and tyrosine. In Bacillus subtilis (strain 168), this protein is Branched-chain-amino-acid transaminase 1 (ilvE).